A 558-amino-acid chain; its full sequence is MATLDKFLSIKENDEKTKKKESKKKSSKSNKTSESLVSHDHFELTPEFENQLWKVADKLRKKMEVHQYKYVVLGLIFLRALTCRFYERRKEIEEELSNPNSELYTEDPELRKMILEDEDFYLSEGVLYLPKETRWDYFVENVMSPNIGEIIDTAIEILEEKYPDRLKDVIPKIYAQSPLDNHDYSYLINKFSEISFGKEHRVKDVFGRIYEYFLGKFTEVEGKLGGKFYTPRSLTKLIVDVLDVKGGSIFDPACGSGGFFVSALEKLEREGIDINELSIYGQDSDPMAYRLTKMNLIIRGAEGDIRIDDSYHDDKFMDMTFDYVVANPPFNDSEWDANRIKPDDPRLRIGNKKVPVPPNGNANYMWILHFIYHTAPNGKAGFVMANGALSAGNVEGEIRKAIIENDLVYGIVACPPKLFYNVSLPVSLWFIRKEKPDYMKGKVLFINAKNLYKQISRRQNILTEEHIKKIVDKFRMFESGEDEDKINELGFAKVATIDEIAKNGYVLTPGRYVGVKIEDDGIPFEVKMKEYSEELKKLLDEEEKLRNKVKEILDALGF.

The interval 1-37 (MATLDKFLSIKENDEKTKKKESKKKSSKSNKTSESLV) is disordered. Residues 8 to 18 (LSIKENDEKTK) are compositionally biased toward basic and acidic residues. Residues 19–28 (KKESKKKSSK) show a composition bias toward basic residues. S-adenosyl-L-methionine-binding positions include 227–232 (KFYTPR), 256–258 (SGG), and aspartate 283.

The protein belongs to the N(4)/N(6)-methyltransferase family. In terms of assembly, the type I restriction/modification system is composed of three polypeptides R, M and S.

It carries out the reaction a 2'-deoxyadenosine in DNA + S-adenosyl-L-methionine = an N(6)-methyl-2'-deoxyadenosine in DNA + S-adenosyl-L-homocysteine + H(+). Functionally, the subtype gamma methyltransferase (M) subunit of a type I restriction enzyme. The M and S subunits together form a methyltransferase (MTase) that methylates A-3 on the top and A-2 on the bottom strand of the sequence 5'-CCAN(5)GTR-3'. In the presence of the R subunit the complex can also act as an endonuclease, binding to the same target sequence but cutting the DNA some distance from this site. Whether the DNA is cut or modified depends on the methylation state of the target sequence. When the target site is unmodified, the DNA is cut. When the target site is hemimethylated, the complex acts as a maintenance MTase modifying the DNA so that both strands become methylated. After locating a non-methylated recognition site, the enzyme complex serves as a molecular motor that translocates DNA in an ATP-dependent manner until a collision occurs that triggers cleavage. The chain is Type I restriction enzyme MjaIX methylase subunit from Methanocaldococcus jannaschii (strain ATCC 43067 / DSM 2661 / JAL-1 / JCM 10045 / NBRC 100440) (Methanococcus jannaschii).